Reading from the N-terminus, the 644-residue chain is Macrolide export ATP-binding/permease protein MacB (644 aa).

The region spanning 4 to 242 is the ABC transporter domain; that stretch reads IECKNINRYF…SNVGRIQEKA (239 aa). Position 40–47 (40–47) interacts with ATP; the sequence is GQSGSGKS. A run of 4 helical transmembrane segments spans residues 270-290, 524-544, 574-594, and 607-627; these read LLTM…VALG, IALI…LVSV, LICI…SLVF, and AASV…FGFM.

It belongs to the ABC transporter superfamily. Macrolide exporter (TC 3.A.1.122) family. Homodimer.

The protein resides in the cell inner membrane. Its function is as follows. Non-canonical ABC transporter that contains transmembrane domains (TMD), which form a pore in the inner membrane, and an ATP-binding domain (NBD), which is responsible for energy generation. Overexpression confers resistance against macrolides. This Neisseria gonorrhoeae protein is Macrolide export ATP-binding/permease protein MacB.